The following is a 146-amino-acid chain: Thyroid hormone-inducible hepatic protein (146 aa).

Residues 83–104 (KVAGSEENGTAETEEVEDESAS) form a disordered region. The span at 94 to 104 (ETEEVEDESAS) shows a compositional bias: acidic residues.

It belongs to the SPOT14 family. As to quaternary structure, homodimer. Heterodimer with MID1IP1. Interacts with THRB and PLAGL1. Mainly expressed in tissues that synthesize triglycerides.

Its subcellular location is the nucleus. The protein localises to the cytoplasm. Functionally, plays a role in the regulation of lipogenesis, especially in lactating mammary gland. Important for the biosynthesis of triglycerides with medium-length fatty acid chains. May modulate lipogenesis by interacting with MID1IP1 and preventing its interaction with ACACA. May function as transcriptional coactivator. May modulate the transcription factor activity of THRB. This Homo sapiens (Human) protein is Thyroid hormone-inducible hepatic protein (THRSP).